The chain runs to 486 residues: High-affinity iron permease fer2 (486 aa).

2 consecutive transmembrane segments (helical) span residues 76 to 96 (IVLL…AAFL) and 113 to 133 (LWEG…SLAI). N174 carries an N-linked (GlcNAc...) asparagine glycan. The segment at 175 to 209 (HSDDSASASSSSARQAAEEEAGTKTTRTEKLNPLE) is disordered. A compositionally biased stretch (low complexity) spans 179–189 (SASASSSSARQ). The next 3 membrane-spanning stretches (helical) occupy residues 252–272 (ALFT…VVFI), 283–303 (SIPL…FLIF), and 308–328 (LVSV…IASG). N-linked (GlcNAc...) asparagine glycosylation occurs at N393. A helical transmembrane segment spans residues 400–420 (SVFMYIGYWFAVAGYLWYQIW). N438 carries an N-linked (GlcNAc...) asparagine glycan. The interval 441–486 (IQARQRKQEKAHQRQLREADQEEHGHSSNSDKQQHPSEAGPSTLSH) is disordered. A compositionally biased stretch (basic and acidic residues) spans 446-466 (RKQEKAHQRQLREADQEEHGH).

It belongs to the oxidase-dependent Fe transporter (OFeT) (TC 9.A.10.1) family.

It localises to the cell membrane. In terms of biological role, permease for high affinity iron uptake. The chain is High-affinity iron permease fer2 from Mycosarcoma maydis (Corn smut fungus).